The chain runs to 344 residues: DNA-directed RNA polymerase subunit alpha (344 aa).

An alpha N-terminal domain (alpha-NTD) region spans residues 1-238; sequence MKVIKTAPLI…KQLGVFGEKP (238 aa). An alpha C-terminal domain (alpha-CTD) region spans residues 253–344; the sequence is DAKDLSAKIE…EKLEDKGGND (92 aa).

Belongs to the RNA polymerase alpha chain family. In terms of assembly, homodimer. The RNAP catalytic core consists of 2 alpha, 1 beta, 1 beta' and 1 omega subunit. When a sigma factor is associated with the core the holoenzyme is formed, which can initiate transcription.

It catalyses the reaction RNA(n) + a ribonucleoside 5'-triphosphate = RNA(n+1) + diphosphate. DNA-dependent RNA polymerase catalyzes the transcription of DNA into RNA using the four ribonucleoside triphosphates as substrates. In Helicobacter acinonychis (strain Sheeba), this protein is DNA-directed RNA polymerase subunit alpha.